We begin with the raw amino-acid sequence, 942 residues long: Mitogen-activated protein kinase kinase kinase 14 (942 aa).

Residues 136 to 152 (GKRHGKARKKRRKKRSK) are compositionally biased toward basic residues. Disordered regions lie at residues 136–156 (GKRHGKARKKRRKKRSKSLAQ) and 291–326 (VSGQRPLPGPPHLSQLAHGDSQKPLPGPHLESSCPS). The region spanning 402 to 657 (MTHQPRVGRG…ELRRKVGKAL (256 aa)) is the Protein kinase domain. The tract at residues 403-655 (THQPRVGRGS…AMELRRKVGK (253 aa)) is interaction with ZFP91. Residues 408 to 416 (VGRGSFGEV) and Lys431 each bind ATP. The active-site Proton acceptor is the Asp517. Thr561 bears the Phosphothreonine mark. 2 disordered regions span residues 660-756 (VGGL…FPDR) and 801-823 (SDDSEKNPSKASQSSRDTLSSGV). Residues 707 to 720 (EPQPPLPPEPPEPS) are compositionally biased toward pro residues. The span at 809 to 823 (SKASQSSRDTLSSGV) shows a compositional bias: polar residues.

The protein belongs to the protein kinase superfamily. STE Ser/Thr protein kinase family. MAP kinase kinase kinase subfamily. Interacts with TRAF2, TRAF3, TRAF5, TRAF6, IKKA and NF-kappa-B2/P100. Interacts with PELI3. Interacts with NIBP; the interaction is direct. Interacts with ARRB1 and ARRB2. Interacts with GRB10. Interacts with ZFP91. Interacts with NLRP12; this interaction promotes proteasomal degradation of MAP3K14. Directly interacts with DDX3X. Interacts (via C-terminus and kinase domain) with PPPC3A (via N-terminus) and PPP3CB. Post-translationally, phosphorylation at Thr-561 is required to activate its kinase activity and 'Lys-63'-linked polyubiquitination. Phosphorylated by CHUK/IKKA leading to MAP3K14 destabilization. Autophosphorylated. Ubiquitinated. Undergoes both 'Lys-48'- and 'Lys-63'-linked polyubiquitination. 'Lys-48'-linked polyubiquitination leads to its degradation by the proteasome, while 'Lys-63'-linked polyubiquitination stabilizes and activates it.

Its subcellular location is the cytoplasm. It carries out the reaction L-seryl-[protein] + ATP = O-phospho-L-seryl-[protein] + ADP + H(+). The catalysed reaction is L-threonyl-[protein] + ATP = O-phospho-L-threonyl-[protein] + ADP + H(+). Lymphotoxin beta-activated kinase which seems to be exclusively involved in the activation of NF-kappa-B and its transcriptional activity. Phosphorylates CHUK/IKKA. Promotes proteolytic processing of NFKB2/P100, which leads to activation of NF-kappa-B via the non-canonical pathway. Has an essential role in the non-canonical NF-kappa-B signalining that regulates genes encoding molecules involved in B-cell survival, lymphoid organogenesis, and immune response. Could act in a receptor-selective manner. This is Mitogen-activated protein kinase kinase kinase 14 from Mus musculus (Mouse).